The sequence spans 212 residues: MATCRRRRRGCNSQARRSRHESDPFVRRARAEGWRSRAALKLEAIDQRDGLFRPGQVVVDLGAAPGGWSQLVAPKVGSAGRVVAIDLLEMDPLPGVTFLHADFSTDEGLRAVERALEGRPVDIVLSDMAPNLTGHNAVDQPAAMGLAELAADFAGQFLHKNGDFLVKVFHGEGFDAFRGDLTRRFSRVLSRKPDASRSGSREVYLLARGPTV.

Residues 1-10 show a composition bias toward basic residues; sequence MATCRRRRRG. Residues 1-24 are disordered; the sequence is MATCRRRRRGCNSQARRSRHESDP. S-adenosyl-L-methionine contacts are provided by glycine 66, tryptophan 68, aspartate 86, aspartate 102, and aspartate 127. Catalysis depends on lysine 167, which acts as the Proton acceptor.

Belongs to the class I-like SAM-binding methyltransferase superfamily. RNA methyltransferase RlmE family.

It is found in the cytoplasm. The catalysed reaction is uridine(2552) in 23S rRNA + S-adenosyl-L-methionine = 2'-O-methyluridine(2552) in 23S rRNA + S-adenosyl-L-homocysteine + H(+). Its function is as follows. Specifically methylates the uridine in position 2552 of 23S rRNA at the 2'-O position of the ribose in the fully assembled 50S ribosomal subunit. The protein is Ribosomal RNA large subunit methyltransferase E of Halorhodospira halophila (strain DSM 244 / SL1) (Ectothiorhodospira halophila (strain DSM 244 / SL1)).